A 506-amino-acid polypeptide reads, in one-letter code: Glutamate--tRNA ligase (506 aa).

A 'HIGH' region motif is present at residues 23–33; sequence PSPTGTPHVGL. The 'KMSKS' region motif lies at 267–271; sequence KLSKR. Lysine 270 is a binding site for ATP.

Belongs to the class-I aminoacyl-tRNA synthetase family. Glutamate--tRNA ligase type 1 subfamily. As to quaternary structure, monomer.

The protein resides in the cytoplasm. The catalysed reaction is tRNA(Glu) + L-glutamate + ATP = L-glutamyl-tRNA(Glu) + AMP + diphosphate. In terms of biological role, catalyzes the attachment of glutamate to tRNA(Glu) in a two-step reaction: glutamate is first activated by ATP to form Glu-AMP and then transferred to the acceptor end of tRNA(Glu). This Clavibacter sepedonicus (Clavibacter michiganensis subsp. sepedonicus) protein is Glutamate--tRNA ligase.